The chain runs to 347 residues: Protein-glutamate methylesterase/protein-glutamine glutaminase 1 (347 aa).

Residues 6–123 (RVLVVDDSAT…LRPFGDLAEK (118 aa)) form the Response regulatory domain. Residue Asp57 is modified to 4-aspartylphosphate. The region spanning 150 to 342 (FRVGRKIVAI…EEILKMTAAR (193 aa)) is the CheB-type methylesterase domain. Residues Ser162, His188, and Asp284 contribute to the active site.

Belongs to the CheB family. In terms of processing, phosphorylated by CheA. Phosphorylation of the N-terminal regulatory domain activates the methylesterase activity.

It localises to the cytoplasm. It carries out the reaction [protein]-L-glutamate 5-O-methyl ester + H2O = L-glutamyl-[protein] + methanol + H(+). It catalyses the reaction L-glutaminyl-[protein] + H2O = L-glutamyl-[protein] + NH4(+). In terms of biological role, involved in chemotaxis. Part of a chemotaxis signal transduction system that modulates chemotaxis in response to various stimuli. Catalyzes the demethylation of specific methylglutamate residues introduced into the chemoreceptors (methyl-accepting chemotaxis proteins or MCP) by CheR. Also mediates the irreversible deamidation of specific glutamine residues to glutamic acid. The chain is Protein-glutamate methylesterase/protein-glutamine glutaminase 1 from Rhizobium johnstonii (strain DSM 114642 / LMG 32736 / 3841) (Rhizobium leguminosarum bv. viciae).